We begin with the raw amino-acid sequence, 335 residues long: uncharacterized protein (335 aa).

It belongs to the glycosyltransferase group 1 family. Glycosyltransferase 4 subfamily.

This is an uncharacterized protein from Sulfolobus islandicus rod-shaped virus 1 (SIRV-1).